We begin with the raw amino-acid sequence, 622 residues long: 1-deoxy-D-xylulose-5-phosphate synthase (622 aa).

Residues His80 and 121 to 123 (GHS) each bind thiamine diphosphate. Residue Asp152 coordinates Mg(2+). Thiamine diphosphate contacts are provided by residues 153–154 (GA), Asn181, Tyr288, and Glu370. Asn181 contributes to the Mg(2+) binding site.

It belongs to the transketolase family. DXPS subfamily. Homodimer. Requires Mg(2+) as cofactor. Thiamine diphosphate is required as a cofactor.

It catalyses the reaction D-glyceraldehyde 3-phosphate + pyruvate + H(+) = 1-deoxy-D-xylulose 5-phosphate + CO2. The protein operates within metabolic intermediate biosynthesis; 1-deoxy-D-xylulose 5-phosphate biosynthesis; 1-deoxy-D-xylulose 5-phosphate from D-glyceraldehyde 3-phosphate and pyruvate: step 1/1. Catalyzes the acyloin condensation reaction between C atoms 2 and 3 of pyruvate and glyceraldehyde 3-phosphate to yield 1-deoxy-D-xylulose-5-phosphate (DXP). This Shewanella loihica (strain ATCC BAA-1088 / PV-4) protein is 1-deoxy-D-xylulose-5-phosphate synthase.